The chain runs to 486 residues: Patatin-like phospholipase domain-containing protein 2 (486 aa).

Residues 1–8 (MFPRETKW) lie on the Cytoplasmic side of the membrane. Residues 9–29 (NISFAGCGFLGVYHIGVASCL) form a helical membrane-spanning segment. A PNPLA domain is found at 10-179 (ISFAGCGFLG…SDNLPLYELK (170 aa)). The GXGXXG motif lies at 14–19 (GCGFLG). Residues 30-42 (REHAPFLVANATH) lie on the Extracellular side of the membrane. N39 carries an N-linked (GlcNAc...) asparagine glycan. The helical transmembrane segment at 43–63 (IYGASAGALTATALVTGACLG) threads the bilayer. The GXSXG motif lies at 45-49 (GASAG). The active-site Nucleophile is the S47. The Cytoplasmic segment spans residues 64–137 (EAGANIIEVS…IISHFSSKDE (74 aa)). K92 participates in a covalent cross-link: Glycyl lysine isopeptide (Lys-Gly) (interchain with G-Cter in ubiquitin). A helical transmembrane segment spans residues 138–158 (LIQANVCSTFIPVYCGLIPPT). Residues 159-331 (LQGVRYVDGG…TTLSNMLPVR (173 aa)) are Extracellular-facing. D166 acts as the Proton acceptor in catalysis. The DGA/G signature appears at 166–168 (DGG). Residues 332 to 352 (LATAMMVPYTLPLESAVSFTI) form a helical membrane-spanning segment. Residues 353–486 (RLLEWLPDVP…PQDPPGLPPC (134 aa)) lie on the Cytoplasmic side of the membrane. S374 bears the Phosphoserine; in vitro mark. Phosphoserine; by PKA is present on residues S396 and S406. Residues S430 and S468 each carry the phosphoserine; in vitro modification. The span at 465–476 (APASPTAADPAT) shows a compositional bias: low complexity. The tract at residues 465–486 (APASPTAADPATPQDPPGLPPC) is disordered. Residues 477–486 (PQDPPGLPPC) show a composition bias toward pro residues.

In terms of assembly, interacts with ABHD5; this association stimulates PNPLA2 triglyceride hydrolase activity. Interacts with SERPINF1; this interaction stimulates the phospholipase A2 activity of PNPLA2. Despite a colocalization in lipid droplets, it probably does not interact with PLIN. Interacts with PLIN5; prevents interaction with ABHD5. Interacts with FAF2. In terms of processing, phosphorylation at Ser-406 by PKA is increased during fasting and moderate intensity exercise, and moderately increases lipolytic activity. Ubiquitinated by PEX2 in response to reactive oxygen species (ROS), leading to its degradation. Ubiquitination is stimulated by LDAH. As to expression, expressed at high levels in white and brown adipose tissue, and to a lesser degree in testis and cardiac muscle. Barely detected in liver, spleen, thymus, kidney, skeletal muscle, and brain. Among the white adipose depots, gonadal fat showed the highest level of expression compared with inguinal and renal white adipose tissues.

It is found in the lipid droplet. The protein localises to the cell membrane. The protein resides in the cytoplasm. The catalysed reaction is a triacylglycerol + H2O = a diacylglycerol + a fatty acid + H(+). It catalyses the reaction a triacylglycerol + H2O = a 1,2-diacylglycerol + a fatty acid + H(+). The enzyme catalyses a triacylglycerol + H2O = a 1,3-diacylglycerol + a fatty acid + H(+). It carries out the reaction a triacyl-sn-glycerol + H2O = a 2,3-diacyl-sn-glycerol + a fatty acid + H(+). The catalysed reaction is a triacyl-sn-glycerol + H2O = a 1,3-diacyl-sn-glycerol + a fatty acid + H(+). It catalyses the reaction 1,2,3-tri-(9Z-octadecenoyl)-glycerol + H2O = 1,3-di-(9Z-octadecenoyl)-glycerol + (9Z)-octadecenoate + H(+). The enzyme catalyses 1,2,3-tri-(9Z)-hexadecenoylglycerol + H2O = 1,3-di-(9Z)-hexadecenoylglycerol + (9Z)-hexadecenoate + H(+). It carries out the reaction 1,2,3-tri-(9Z,12Z)-octadecadienoylglycerol + H2O = 1,3-di-(9Z,12Z)-octadecadienoylglycerol + (9Z,12Z)-octadecadienoate + H(+). The catalysed reaction is 1,2,3-tri-(9Z,12Z,15Z)-octadecatrienoylglycerol + H2O = 1,3-di-(9Z,12Z,15Z)-octadecatrienoylglycerol + (9Z,12Z,15Z)-octadecatrienoate + H(+). It catalyses the reaction 1,3-di-(9Z)-octadecenoyl-2-hexadecanoylglycerol + H2O = 1,3-di-(9Z-octadecenoyl)-glycerol + hexadecanoate + H(+). The enzyme catalyses 1,2-di-(9Z)-octadecenoyl-3-hexadecanoyl-sn-glycerol + H2O = 1-(9Z)-octadecenoyl-3-hexadecanoyl-sn-glycerol + (9Z)-octadecenoate + H(+). It carries out the reaction 1-hexadecanoyl-2,3-di-(9Z)-octadecenoyl-sn-glycerol + H2O = 1-hexadecanoyl-3-(9Z)-octadecenoyl-sn-glycerol + (9Z)-octadecenoate + H(+). The catalysed reaction is 1,2,3-tri-(9Z-octadecenoyl)-glycerol + H2O = 2,3-di-(9Z)-octadecenoyl-sn-glycerol + (9Z)-octadecenoate + H(+). It catalyses the reaction 1,2,3-tri-(9Z)-hexadecenoylglycerol + H2O = 2,3-di-(9Z)-hexadecenoyl-sn-glycerol + (9Z)-hexadecenoate + H(+). The enzyme catalyses 1,2,3-tri-(9Z,12Z)-octadecadienoylglycerol + H2O = 2,3-di-(9Z,12Z)-octadecadienoyl-sn-glycerol + (9Z,12Z)-octadecadienoate + H(+). It carries out the reaction 1,2,3-tri-(9Z,12Z,15Z)-octadecatrienoylglycerol + H2O = 2,3-di-(9Z,12Z,15Z)-octadecatrienoyl-sn-glycerol + (9Z,12Z,15Z)-octadecatrienoate + H(+). The catalysed reaction is 1,3-di-(9Z)-octadecenoyl-2-hexadecanoylglycerol + H2O = 2-hexadecanoyl-3-(9Z)-octadecenoyl-sn-glycerol + (9Z)-octadecenoate + H(+). It catalyses the reaction 1-hexadecanoyl-2,3-di-(9Z)-octadecenoyl-sn-glycerol + H2O = 2,3-di-(9Z)-octadecenoyl-sn-glycerol + hexadecanoate + H(+). The enzyme catalyses 1,2-di-(9Z)-octadecenoyl-3-hexadecanoyl-sn-glycerol + H2O = 2-(9Z-octadecenoyl)-3-hexadecanoyl-sn-glycerol + (9Z)-octadecenoate + H(+). It carries out the reaction 1,2-di-(9Z-octadecenoyl)-glycerol + (9Z)-octadecenoate + H(+) = 1,2,3-tri-(9Z-octadecenoyl)-glycerol + H2O. The catalysed reaction is a 1-acylglycerol + a 1,3-diacylglycerol = a triacylglycerol + glycerol. It catalyses the reaction a 1-acylglycerol + a 1,2-diacylglycerol = a triacylglycerol + glycerol. The enzyme catalyses 2 a 1-acylglycerol = a 1,2-diacylglycerol + glycerol. It carries out the reaction a triacylglycerol + all-trans-retinol = an all-trans-retinyl ester + a diacylglycerol. The catalysed reaction is 1-(9Z-octadecenoyl)-glycerol + 1,3-di-(9Z-octadecenoyl)-glycerol = 1,2,3-tri-(9Z-octadecenoyl)-glycerol + glycerol. It catalyses the reaction 1-(9Z-octadecenoyl)-glycerol + 1,2-di-(9Z-octadecenoyl)-glycerol = 1,2,3-tri-(9Z-octadecenoyl)-glycerol + glycerol. The enzyme catalyses 2 1-(9Z-octadecenoyl)-glycerol = 1,2-di-(9Z-octadecenoyl)-glycerol + glycerol. It carries out the reaction 1,2,3-tri-(9Z-octadecenoyl)-glycerol + all-trans-retinol = all-trans-retinyl 9Z-octadecenoate + di-(9Z)-octadecenoylglycerol. The catalysed reaction is a 1,2-diacyl-sn-glycero-3-phosphocholine + H2O = a 1-acyl-sn-glycero-3-phosphocholine + a fatty acid + H(+). It catalyses the reaction 1,2,3-tri-(9Z-octadecenoyl)-glycerol + 9-hydroxy-octadecanoate = 9-(9Z-octadecenoyloxy)-octadecanoate + 2,3-di-(9Z)-octadecenoyl-sn-glycerol. The enzyme catalyses 1-hexadecanoyl-2,3-di-(9Z)-octadecenoyl-sn-glycerol + 9-hydroxy-octadecanoate = 9-hexadecanoyloxy-octadecanoate + 2,3-di-(9Z)-octadecenoyl-sn-glycerol. It carries out the reaction 1,2,3-tri-(10Z)-heptadecenoylglycerol + 9-hydroxy-octadecanoate = 2,3-di-(10Z-heptadecenoyl)-sn-glycerol + 9-(10Z-heptadecenoyloxy)-octadecanoate. The catalysed reaction is 1,2,3-tri-(9Z,12Z)-octadecadienoylglycerol + 9-hydroxy-octadecanoate = 2,3-di-(9Z,12Z)-octadecadienoyl-sn-glycerol + 9-(9Z,12Z-octadecadienoyloxy)-octadecanoate. It catalyses the reaction 1,2,3-tri-(9Z)-hexadecenoylglycerol + 9-hydroxy-octadecanoate = 2,3-di-(9Z)-hexadecenoyl-sn-glycerol + 9-(9Z-hexadecenoyloxy)-octadecanoate. The enzyme catalyses 9-hydroxy-octadecanoate + 1,2-di-(9Z-octadecenoyl)-sn-glycerol = 9-(9Z-octadecenoyloxy)-octadecanoate + 2-(9Z-octadecenoyl)-glycerol. It carries out the reaction 1-hexadecanoyl-2,3-di-(9Z)-octadecenoyl-sn-glycerol + 9-hydroxy-octadecanoate = 1-hexadecanoyl-3-(9Z)-octadecenoyl-sn-glycerol + 9-(9Z-octadecenoyloxy)-octadecanoate. It functions in the pathway glycerolipid metabolism; triacylglycerol degradation. Its activity is regulated as follows. Stimulated by PKA-dependent PLIN phosphorylation. Functionally, catalyzes the initial step in triglyceride hydrolysis in adipocyte and non-adipocyte lipid droplets. Exhibits a strong preference for the hydrolysis of long-chain fatty acid esters at the sn-2 position of the glycerol backbone and acts coordinately with LIPE/HLS and DGAT2 within the lipolytic cascade. Also possesses acylglycerol transacylase and phospholipase A2 activities. Transfers fatty acid from triglyceride to retinol, hydrolyzes retinylesters, and generates 1,3-diacylglycerol from triglycerides. Regulates adiposome size and may be involved in the degradation of adiposomes. Catalyzes the formation of an ester bond between hydroxy fatty acids and fatty acids derived from triglycerides or diglycerides to generate fatty acid esters of hydroxy fatty acids (FAHFAs) in adipocytes. Acts antagonistically with LDAH in regulation of cellular lipid stores. Inhibits LDAH-stimulated lipid droplet fusion. May play an important role in energy homeostasis. May play a role in the response of the organism to starvation, enhancing hydrolysis of triglycerides and providing free fatty acids to other tissues to be oxidized in situations of energy depletion. In Mus musculus (Mouse), this protein is Patatin-like phospholipase domain-containing protein 2.